Here is a 1167-residue protein sequence, read N- to C-terminus: Chromosome partition protein Smc (1167 aa).

ATP is bound at residue 32 to 39 (PNGCGKSN). Coiled-coil stretches lie at residues 170 to 274 (ISKY…RIET), 310 to 390 (QREL…HNRD), 468 to 500 (GLQEQQRASQGELAEVRKQAQAARGRLSSLETL), 653 to 870 (ALLR…ERAL), and 982 to 1011 (EYLDAQNLDLNTALETLEEAIRKIDRETRG).

It belongs to the SMC family. Homodimer.

It localises to the cytoplasm. Required for chromosome condensation and partitioning. The chain is Chromosome partition protein Smc from Xanthomonas oryzae pv. oryzae (strain KACC10331 / KXO85).